The primary structure comprises 343 residues: Protein RecA (343 aa).

Residue 66-73 coordinates ATP; it reads GPESSGKT. The segment at 319-343 is disordered; the sequence is IERQIREKHLPKRSAKADEAESAEA.

It belongs to the RecA family.

The protein resides in the cytoplasm. Functionally, can catalyze the hydrolysis of ATP in the presence of single-stranded DNA, the ATP-dependent uptake of single-stranded DNA by duplex DNA, and the ATP-dependent hybridization of homologous single-stranded DNAs. It interacts with LexA causing its activation and leading to its autocatalytic cleavage. This Thioalkalivibrio sulfidiphilus (strain HL-EbGR7) protein is Protein RecA.